A 542-amino-acid chain; its full sequence is Excitatory amino acid transporter 1 (542 aa).

The Cytoplasmic portion of the chain corresponds to 1–47 (MTKSNGEEARLGGRMERFQQGVRKRTLLAKKKVQNITKEDVKSYLFR). Residues 48–68 (NAFVLLTVTAVIVGTILGFTL) traverse the membrane as a helical segment. At 69 to 86 (RPYRMSYREVKYFSFPGE) the chain is on the extracellular side. A helical transmembrane segment spans residues 87–108 (LLMRMLQMLVLPLIISSLVTGM). Residues 109–122 (AALDSKASGKMGMR) lie on the Cytoplasmic side of the membrane. The helical transmembrane segment at 123-145 (AVVYYMTTTIIAVVIGIIIVIII) threads the bilayer. The Extracellular segment spans residues 146–236 (HPGKGTKENM…ITEELVPVPG (91 aa)). The chain crosses the membrane as a helical span at residues 237–260 (SVNGVNALGLVVFSMCFGFVIGNM). At 261-269 (KEQGQALRE) the chain is on the cytoplasmic side. A helical transmembrane segment spans residues 270 to 297 (FFDSLNEAIMRLVAVIMWYAPLGILFLI). Topologically, residues 298–318 (AGKIVEMEDMGVIGGQLAMYT) are extracellular. Residues 319-340 (VTVIVGLLIHAVIVLPLLYFLV) form a helical membrane-spanning segment. The Cytoplasmic portion of the chain corresponds to 341-345 (TRKNP). Positions 346–376 (WVFIGGLLQALITALGTSSSSATLPITFKCL) form an intramembrane region, discontinuously helical. Position 363–365 (363–365 (SSS)) interacts with L-aspartate. The Cytoplasmic portion of the chain corresponds to 377 to 385 (EENNGVDKR). A helical membrane pass occupies residues 386-412 (VTRFVLPVGATINMDGTALYEALAAIF). Residues glycine 394, threonine 396, and asparagine 398 each contribute to the Na(+) site. Residue threonine 402 participates in L-aspartate binding. At 413 to 425 (IAQVNNFELNFGQ) the chain is on the extracellular side. Positions 426 to 459 (IITISITATAASIGAAGIPQAGLVTMVIVLTSVG) form an intramembrane region, discontinuously helical. L-aspartate is bound at residue 443 to 447 (IPQAG). The Extracellular portion of the chain corresponds to 460–472 (LPTDDITLIIAVD). A helical membrane pass occupies residues 473 to 494 (WFLDRLRTTTNVLGDSLGAGIV). The L-aspartate site is built by aspartate 476 and asparagine 483. Na(+)-binding residues include asparagine 483 and aspartate 487. Over 495 to 542 (EHLSRHELKNRDVEMGNSVIEENEMKKPYQLISQESEIEKSMDSETKM) the chain is Cytoplasmic. Residue serine 512 is modified to Phosphoserine.

It belongs to the dicarboxylate/amino acid:cation symporter (DAACS) (TC 2.A.23) family. SLC1A3 subfamily. In terms of assembly, homotrimer. Post-translationally, glycosylated.

The protein localises to the cell membrane. The catalysed reaction is K(+)(in) + L-glutamate(out) + 3 Na(+)(out) + H(+)(out) = K(+)(out) + L-glutamate(in) + 3 Na(+)(in) + H(+)(in). The enzyme catalyses K(+)(in) + L-aspartate(out) + 3 Na(+)(out) + H(+)(out) = K(+)(out) + L-aspartate(in) + 3 Na(+)(in) + H(+)(in). It catalyses the reaction D-aspartate(out) + K(+)(in) + 3 Na(+)(out) + H(+)(out) = D-aspartate(in) + K(+)(out) + 3 Na(+)(in) + H(+)(in). Functionally, sodium-dependent, high-affinity amino acid transporter that mediates the uptake of L-glutamate and also L-aspartate and D-aspartate. Functions as a symporter that transports one amino acid molecule together with two or three Na(+) ions and one proton, in parallel with the counter-transport of one K(+) ion. Plays a redundant role in the rapid removal of released glutamate from the synaptic cleft, which is essential for terminating the postsynaptic action of glutamate. The protein is Excitatory amino acid transporter 1 (SLC1A3) of Bos taurus (Bovine).